The chain runs to 535 residues: GMP synthase [glutamine-hydrolyzing] (535 aa).

In terms of domain architecture, Glutamine amidotransferase type-1 spans 24–217 (KILIVDFGSQ…VRKVAGLKGD (194 aa)). Cys101 functions as the Nucleophile in the catalytic mechanism. Active-site residues include His191 and Glu193. A GMPS ATP-PPase domain is found at 218–410 (WTMRAFREEA…LGLPEVFVGR (193 aa)). 245 to 251 (SGGVDSA) serves as a coordination point for ATP.

In terms of assembly, homodimer.

It carries out the reaction XMP + L-glutamine + ATP + H2O = GMP + L-glutamate + AMP + diphosphate + 2 H(+). It functions in the pathway purine metabolism; GMP biosynthesis; GMP from XMP (L-Gln route): step 1/1. In terms of biological role, catalyzes the synthesis of GMP from XMP. This is GMP synthase [glutamine-hydrolyzing] from Rhodopseudomonas palustris (strain BisB18).